The chain runs to 123 residues: Immunoglobulin lambda variable 5-37 (123 aa).

Positions 1–19 (MAWTPLLLLLLSHCTGSLS) are cleaved as a signal peptide. The framework-1 stretch occupies residues 20 to 44 (QPVLTQPPSSSASPGESARLTCTLP). The Ig-like domain maps to 21-123 (PVLTQPPSSS…YCMIWPSNAS (103 aa)). Cys41 and Cys115 are oxidised to a cystine. The complementarity-determining-1 stretch occupies residues 45-53 (SDINVGSYN). The segment at 54 to 70 (IYWYQQKPGSPPRYLLY) is framework-2. A complementarity-determining-2 region spans residues 71–77 (YYSDSDK). The tract at residues 78–115 (GQGSGVPSRFSGSKDASANTGILLISGLQSEDEADYYC) is framework-3. Residues 116-123 (MIWPSNAS) form a complementarity-determining-3 region.

In terms of assembly, immunoglobulins are composed of two identical heavy chains and two identical light chains; disulfide-linked.

It is found in the secreted. The protein resides in the cell membrane. In terms of biological role, v region of the variable domain of immunoglobulin light chains that participates in the antigen recognition. Immunoglobulins, also known as antibodies, are membrane-bound or secreted glycoproteins produced by B lymphocytes. In the recognition phase of humoral immunity, the membrane-bound immunoglobulins serve as receptors which, upon binding of a specific antigen, trigger the clonal expansion and differentiation of B lymphocytes into immunoglobulins-secreting plasma cells. Secreted immunoglobulins mediate the effector phase of humoral immunity, which results in the elimination of bound antigens. The antigen binding site is formed by the variable domain of one heavy chain, together with that of its associated light chain. Thus, each immunoglobulin has two antigen binding sites with remarkable affinity for a particular antigen. The variable domains are assembled by a process called V-(D)-J rearrangement and can then be subjected to somatic hypermutations which, after exposure to antigen and selection, allow affinity maturation for a particular antigen. The protein is Immunoglobulin lambda variable 5-37 of Homo sapiens (Human).